An 88-amino-acid polypeptide reads, in one-letter code: Large ribosomal subunit protein bL27 (88 aa).

This sequence belongs to the bacterial ribosomal protein bL27 family.

The chain is Large ribosomal subunit protein bL27 from Acidobacterium capsulatum (strain ATCC 51196 / DSM 11244 / BCRC 80197 / JCM 7670 / NBRC 15755 / NCIMB 13165 / 161).